The chain runs to 432 residues: Adenylosuccinate synthetase (432 aa).

Residues 13 to 19 (GDEGKGK) and 41 to 43 (GHT) contribute to the GTP site. D14 (proton acceptor) is an active-site residue. The Mg(2+) site is built by D14 and G41. IMP-binding positions include 14 to 17 (DEGK), 39 to 42 (NAGH), T130, R144, Q225, T240, and R304. The Proton donor role is filled by H42. 300 to 306 (ATTGRRR) is a substrate binding site. Residues R306, 332-334 (KLD), and 415-417 (STG) each bind GTP.

Belongs to the adenylosuccinate synthetase family. Homodimer. Mg(2+) serves as cofactor.

It localises to the cytoplasm. It carries out the reaction IMP + L-aspartate + GTP = N(6)-(1,2-dicarboxyethyl)-AMP + GDP + phosphate + 2 H(+). It participates in purine metabolism; AMP biosynthesis via de novo pathway; AMP from IMP: step 1/2. Functionally, plays an important role in the de novo pathway of purine nucleotide biosynthesis. Catalyzes the first committed step in the biosynthesis of AMP from IMP. The polypeptide is Adenylosuccinate synthetase (Pectobacterium atrosepticum (strain SCRI 1043 / ATCC BAA-672) (Erwinia carotovora subsp. atroseptica)).